The sequence spans 307 residues: Protease HtpX homolog (307 aa).

The helical transmembrane segment at 16-36 (LFMGVGYLIGGAAGAMIALVV) threads the bilayer. His130 is a binding site for Zn(2+). The active site involves Glu131. Zn(2+) is bound at residue His134. The next 2 membrane-spanning stretches (helical) occupy residues 145–165 (ITATIAGAISMLAQFGMFFGG) and 172–192 (GPGIIGSLAMMILAPLGAMLV). Glu201 contributes to the Zn(2+) binding site. The tract at residues 278-307 (AGQSGSATPDPAPAPRGPWNGGAPRRGPWG) is disordered.

It belongs to the peptidase M48B family. It depends on Zn(2+) as a cofactor.

The protein resides in the cell inner membrane. The sequence is that of Protease HtpX homolog from Nitrobacter hamburgensis (strain DSM 10229 / NCIMB 13809 / X14).